A 263-amino-acid polypeptide reads, in one-letter code: Heat-labile enterotoxin IIB, A chain (263 aa).

An N-terminal signal peptide occupies residues M1 to A20. A26–G39 contacts NAD(+). E130 is an active-site residue. A disulfide bond links C205 and C217.

This sequence belongs to the enterotoxin A family. As to quaternary structure, heterohexamer of one A chain and of five B chains.

The biological activity of the toxin is produced by the A chain, which activates intracellular adenyl cyclase. The polypeptide is Heat-labile enterotoxin IIB, A chain (Escherichia coli).